A 442-amino-acid polypeptide reads, in one-letter code: tRNA-2-methylthio-N(6)-dimethylallyladenosine synthase (442 aa).

In terms of domain architecture, MTTase N-terminal spans 5-122; that stretch reads KRIFIKTFGC…LPDMIESKRR (118 aa). Cysteine 14, cysteine 51, cysteine 85, cysteine 159, cysteine 163, and cysteine 166 together coordinate [4Fe-4S] cluster. The Radical SAM core domain maps to 145–377; the sequence is RVEGAAAFLS…QALNEAQGKA (233 aa). Positions 380-442 constitute a TRAM domain; the sequence is ASMVGSIQRV…LSHTLRGELV (63 aa).

The protein belongs to the methylthiotransferase family. MiaB subfamily. In terms of assembly, monomer. [4Fe-4S] cluster serves as cofactor.

The protein localises to the cytoplasm. It catalyses the reaction N(6)-dimethylallyladenosine(37) in tRNA + (sulfur carrier)-SH + AH2 + 2 S-adenosyl-L-methionine = 2-methylsulfanyl-N(6)-dimethylallyladenosine(37) in tRNA + (sulfur carrier)-H + 5'-deoxyadenosine + L-methionine + A + S-adenosyl-L-homocysteine + 2 H(+). Functionally, catalyzes the methylthiolation of N6-(dimethylallyl)adenosine (i(6)A), leading to the formation of 2-methylthio-N6-(dimethylallyl)adenosine (ms(2)i(6)A) at position 37 in tRNAs that read codons beginning with uridine. In Methylobacillus flagellatus (strain ATCC 51484 / DSM 6875 / VKM B-1610 / KT), this protein is tRNA-2-methylthio-N(6)-dimethylallyladenosine synthase.